The primary structure comprises 291 residues: Methyl-CpG-binding domain protein 3 (291 aa).

Residues 1–72 (MERKRWECPA…DFRTGKMLMS (72 aa)) form the MBD domain. The tract at residues 1-80 (MERKRWECPA…MSKMNKSRQR (80 aa)) is required for interaction with MBD2. Residue Ser-56 is modified to Phosphoserine. The segment at 60–80 (STFDFRTGKMLMSKMNKSRQR) is required for interaction with MBD3L2. Residue Lys-73 forms a Glycyl lysine isopeptide (Lys-Gly) (interchain with G-Cter in SUMO2) linkage. Phosphoserine is present on Ser-85. Glycyl lysine isopeptide (Lys-Gly) (interchain with G-Cter in SUMO2) cross-links involve residues Lys-90 and Lys-92. Ser-144 carries the post-translational modification Phosphoserine. Residues 216 to 245 (KAFMVTDEDIRKQEELVQQVRKRLEEALMA) adopt a coiled-coil conformation. A compositionally biased stretch (basic and acidic residues) spans 254–267 (LARDGEAPLDKACA). The disordered stretch occupies residues 254 to 291 (LARDGEAPLDKACAEDDDEEDEEEEEEEPDPDPEMEHV). Residues 268–291 (EDDDEEDEEEEEEEPDPDPEMEHV) are compositionally biased toward acidic residues.

In terms of assembly, heterodimer (via N-terminus) with MBD2. Component of the MeCP1 histone deacetylase complex. Component of the nucleosome remodeling and deacetylase (NuRD) repressor complex, composed of core proteins MTA1, MTA2, MTA3, RBBP4, RBBP7, HDAC1, HDAC2, MBD2, MBD3, and peripherally associated proteins CDK2AP1, CDK2AP2, GATAD2A, GATAD2B, CHD3, CHD4 and CHD5. The exact stoichiometry of the NuRD complex is unknown, and some subunits such as MBD2 and MBD3, GATAD2A and GATAD2B, and CHD3, CHD4 and CHD5 define mutually exclusive NuRD complexes. Interacts with MBD3L2 (via N-terminus); the interaction is direct. Interacts with BCL6. Interacts with CDK2AP1. Interacts with HDAC1. Interacts with MTA2. Interacts with DNMT1. Interacts with GATAD2A. Interacts with GATAD2B. Does not interact with PWWP2A. Does not interact with PWWP2B.

The protein localises to the nucleus. Its subcellular location is the chromosome. Its function is as follows. Acts as a component of the histone deacetylase NuRD complex which participates in the remodeling of chromatin. Acts as transcriptional repressor and plays a role in gene silencing. Does not bind to methylated DNA by itself. Binds to a lesser degree DNA containing unmethylated CpG dinucleotides. Recruits histone deacetylases and DNA methyltransferases. The polypeptide is Methyl-CpG-binding domain protein 3 (MBD3) (Homo sapiens (Human)).